A 516-amino-acid chain; its full sequence is Putative fatty acyl-CoA reductase CG8306 (516 aa).

3 helical membrane-spanning segments follow: residues 356–376 (WVFR…LDLV), 471–491 (ILLG…FKLI), and 496–516 (GIST…FGLL).

The protein belongs to the fatty acyl-CoA reductase family.

Its subcellular location is the membrane. The enzyme catalyses a long-chain fatty acyl-CoA + 2 NADPH + 2 H(+) = a long-chain primary fatty alcohol + 2 NADP(+) + CoA. In terms of biological role, catalyzes the reduction of C16 or C18 fatty acyl-CoA to fatty alcohols. The chain is Putative fatty acyl-CoA reductase CG8306 from Drosophila melanogaster (Fruit fly).